Reading from the N-terminus, the 108-residue chain is Small proline-rich protein 2H (108 aa).

Over residues 1–11 the composition is skewed to low complexity; the sequence is MSYQQQQCKQP. Residues 1-22 form a disordered region; the sequence is MSYQQQQCKQPCQPPPVCPPPQ. Residues 12 to 22 show a composition bias toward pro residues; sequence CQPPPVCPPPQ. 7 repeat units span residues 21–29, 30–38, 39–47, 48–56, 57–65, 66–74, and 75–83. The tract at residues 21–83 is 7 X 9 AA tandem repeats of P-[KQ]-C-[PT]-E-P-C-P-P; it reads PQCPEPCPPP…PPKCTEPCPP (63 aa). The disordered stretch occupies residues 83–108; it reads PPSYQQKCPSVQPSPPCQQKCPPKNK. Positions 87–108 are enriched in low complexity; it reads QQKCPSVQPSPPCQQKCPPKNK.

It belongs to the cornifin (SPRR) family. Expressed weakly in uterus.

It localises to the cytoplasm. Its function is as follows. Cross-linked envelope protein of keratinocytes. It is a keratinocyte protein that first appears in the cell cytosol, but ultimately becomes cross-linked to membrane proteins by transglutaminase. All that results in the formation of an insoluble envelope beneath the plasma membrane. This chain is Small proline-rich protein 2H (Sprr2h), found in Mus musculus (Mouse).